Reading from the N-terminus, the 255-residue chain is Proteasome subunit alpha (255 aa).

The segment at 224–255 (RLEELLGERGPAQHAPEEPADPEPEPPIAPPG) is disordered.

This sequence belongs to the peptidase T1A family. The 20S proteasome core is composed of 14 alpha and 14 beta subunits that assemble into four stacked heptameric rings, resulting in a barrel-shaped structure. The two inner rings, each composed of seven catalytic beta subunits, are sandwiched by two outer rings, each composed of seven alpha subunits. The catalytic chamber with the active sites is on the inside of the barrel. Has a gated structure, the ends of the cylinder being occluded by the N-termini of the alpha-subunits. Is capped by the proteasome-associated ATPase, ARC.

It localises to the cytoplasm. It participates in protein degradation; proteasomal Pup-dependent pathway. With respect to regulation, the formation of the proteasomal ATPase ARC-20S proteasome complex, likely via the docking of the C-termini of ARC into the intersubunit pockets in the alpha-rings, may trigger opening of the gate for substrate entry. Interconversion between the open-gate and close-gate conformations leads to a dynamic regulation of the 20S proteasome proteolysis activity. Its function is as follows. Component of the proteasome core, a large protease complex with broad specificity involved in protein degradation. The chain is Proteasome subunit alpha from Nocardioides sp. (strain ATCC BAA-499 / JS614).